The chain runs to 91 residues: Small ribosomal subunit protein uS15c (91 aa).

Belongs to the universal ribosomal protein uS15 family. Part of the 30S ribosomal subunit.

The protein resides in the plastid. It is found in the chloroplast. This Ceratophyllum demersum (Rigid hornwort) protein is Small ribosomal subunit protein uS15c (rps15).